The chain runs to 430 residues: Pre-B-cell leukemia transcription factor 1 (430 aa).

Positions 1 to 40 (MDEQPRLMHSHAGVGMAGHPGLSQHLQDGAGGTEGEGGRK) are disordered. The 195-residue stretch at 38–232 (GRKQDIGDIL…VMILRSRFLD (195 aa)) folds into the PBC domain. The tract at residues 45-124 (DILQQIMTIT…EGVAGPEKGG (80 aa)) is PBC-A. Residues 127–232 (AAAAAAAAAS…VMILRSRFLD (106 aa)) are PBC-B. A DNA-binding region (homeobox; TALE-type) is located at residues 233–295 (ARRKRRNFNK…NKRIRYKKNI (63 aa)). Disordered stretches follow at residues 317–338 (SAHG…SSSF) and 395–430 (SPQG…DTSN). The segment covering 323–338 (ANSPSTPNSAGSSSSF) has biased composition (low complexity). Residues 407–418 (DATTPSSVTSPT) are compositionally biased toward polar residues.

It belongs to the TALE/PBX homeobox family. In terms of assembly, forms a heterodimer with MEIS1 which binds DNA. The PBX1-MEIS1 heterodimer binds a cAMP-responsive sequence in CYP17. It also binds a consensus region in the SOX3 promoter. PBX1 forms heterotrimers with MEIS1 and a number of HOX proteins including HOXA9, HOXD4, HOXD9 and HOXD10. Forms heterodimers with HOXA1, HOXA5, HOXB7 and HOXB8 which bind the 5'-TGATTGAT-3' consensus sequence. Also forms heterodimers with HOXA5, HOXB7, HOXB8, HOXC8 and HOXD4 which bind the 5'-ATCAATCAA-3' consensus sequence. Interacts with PBXIP1. Interacts with TLX1. Interacts with FOXC1. Interacts with MN1. As to quaternary structure, interacts with MEIS2 isoform 4, SP1, SP3 and KLF4. Part of a PDX1:PBX1b:MEIS2B complex; PBX1b recruits MEIS2B to the complex. Expressed in the kidney. Expressed in the endothelial cells of the glomeruli and interstitium (at protein level). Expressed in all tissues except in cells of the B and T lineage. Expressed strongly in kidney and brain.

Its subcellular location is the nucleus. Functionally, transcription factor which binds the DNA sequence 5'-TGATTGAT-3' as part of a heterodimer with HOX proteins such as HOXA1, HOXA5, HOXB7 and HOXB8. Binds to the DNA sequence 5'-TGATTGAC-3' in complex with a nuclear factor which is not a class I HOX protein. Has also been shown to bind the DNA sequence 5'-ATCAATCAA-3' cooperatively with HOXA5, HOXB7, HOXB8, HOXC8 and HOXD4. Acts as a transcriptional activator of PF4 in complex with MEIS1. Also activates transcription of SOX3 in complex with MEIS1 by binding to the 5'-TGATTGAC-3' consensus sequence. In natural killer cells, binds to the NFIL3 promoter and acts as a transcriptional activator of NFIL3, promoting natural killer cell development. Plays a role in the cAMP-dependent regulation of CYP17A1 gene expression via its cAMP-regulatory sequence (CRS1). Probably in complex with MEIS2, involved in transcriptional regulation by KLF4. Acts as a transcriptional activator of NKX2-5 and a transcriptional repressor of CDKN2B. Together with NKX2-5, required for spleen development through a mechanism that involves CDKN2B repression. As part of a PDX1:PBX1b:MEIS2B complex in pancreatic acinar cells, is involved in the transcriptional activation of the ELA1 enhancer; the complex binds to the enhancer B element and cooperates with the transcription factor 1 complex (PTF1) bound to the enhancer A element. This is Pre-B-cell leukemia transcription factor 1 (PBX1) from Homo sapiens (Human).